We begin with the raw amino-acid sequence, 72 residues long: MAKEGAIEVEGRIVEPLPNAMFRVELDNGHKVLAHISGKMRQHYIRILPEDRVVVELSPYDLTRGRIVYRYK.

The region spanning 1–72 (MAKEGAIEVE…TRGRIVYRYK (72 aa)) is the S1-like domain.

It belongs to the IF-1 family. As to quaternary structure, component of the 30S ribosomal translation pre-initiation complex which assembles on the 30S ribosome in the order IF-2 and IF-3, IF-1 and N-formylmethionyl-tRNA(fMet); mRNA recruitment can occur at any time during PIC assembly.

Its subcellular location is the cytoplasm. In terms of biological role, one of the essential components for the initiation of protein synthesis. Stabilizes the binding of IF-2 and IF-3 on the 30S subunit to which N-formylmethionyl-tRNA(fMet) subsequently binds. Helps modulate mRNA selection, yielding the 30S pre-initiation complex (PIC). Upon addition of the 50S ribosomal subunit IF-1, IF-2 and IF-3 are released leaving the mature 70S translation initiation complex. The sequence is that of Translation initiation factor IF-1 from Corynebacterium glutamicum (strain R).